A 467-amino-acid chain; its full sequence is Serine/threonine-protein phosphatase 2A 56 kDa regulatory subunit epsilon isoform (467 aa).

Residues 1–39 (MSSAPTTPPSVDKVDGFSRKSVRKARQKRSQSSSQFRSQ) form a disordered region. Residue Ser2 is modified to N-acetylserine. Thr7 carries the phosphothreonine modification. Residues 20–29 (KSVRKARQKR) are compositionally biased toward basic residues. Ser30, Ser32, and Ser34 each carry phosphoserine. Over residues 30 to 39 (SQSSSQFRSQ) the composition is skewed to low complexity.

Belongs to the phosphatase 2A regulatory subunit B56 family. In terms of assembly, PP2A consists of a common heterodimeric core enzyme, composed of a 36 kDa catalytic subunit (subunit C) and a 65 kDa constant regulatory subunit (PR65 or subunit A), that associates with a variety of regulatory subunits. Proteins that associate with the core dimer include three families of regulatory subunits B (the R2/B/PR55/B55, R3/B''/PR72/PR130/PR59 and R5/B'/B56 families), the 48 kDa variable regulatory subunit, viral proteins, and cell signaling molecules. Interacts with SGO1. Found in a complex with at least ARL2, PPP2CB; PPP2R1A, PPP2R2A, PPP2R5E and TBCD.

It is found in the cytoplasm. Its function is as follows. The B regulatory subunit might modulate substrate selectivity and catalytic activity, and might also direct the localization of the catalytic enzyme to a particular subcellular compartment. Interacts with cyclin G in vitro. This is Serine/threonine-protein phosphatase 2A 56 kDa regulatory subunit epsilon isoform (Ppp2r5e) from Mus musculus (Mouse).